Here is a 78-residue protein sequence, read N- to C-terminus: Small ribosomal subunit protein bS16c (78 aa).

This sequence belongs to the bacterial ribosomal protein bS16 family.

The protein resides in the plastid. It is found in the chloroplast. This chain is Small ribosomal subunit protein bS16c, found in Chara vulgaris (Common stonewort).